A 407-amino-acid chain; its full sequence is Proteasome-activating nucleotidase (407 aa).

The stretch at lysine 22–isoleucine 67 forms a coiled coil. Residues glycine 192 to leucine 197 and histidine 331 contribute to the ATP site. The tract at residues methionine 405–glycine 407 is docks into pockets in the proteasome alpha-ring to cause gate opening.

The protein belongs to the AAA ATPase family. As to quaternary structure, homohexamer. The hexameric complex has a two-ring architecture resembling a top hat that caps the 20S proteasome core at one or both ends. Upon ATP-binding, the C-terminus of PAN interacts with the alpha-rings of the proteasome core by binding to the intersubunit pockets.

The protein localises to the cytoplasm. In terms of biological role, ATPase which is responsible for recognizing, binding, unfolding and translocation of substrate proteins into the archaeal 20S proteasome core particle. Is essential for opening the gate of the 20S proteasome via an interaction with its C-terminus, thereby allowing substrate entry and access to the site of proteolysis. Thus, the C-termini of the proteasomal ATPase function like a 'key in a lock' to induce gate opening and therefore regulate proteolysis. Unfolding activity requires energy from ATP hydrolysis, whereas ATP binding alone promotes ATPase-20S proteasome association which triggers gate opening, and supports translocation of unfolded substrates. The chain is Proteasome-activating nucleotidase from Methanococcus maripaludis (strain DSM 14266 / JCM 13030 / NBRC 101832 / S2 / LL).